The primary structure comprises 428 residues: Histidinol dehydrogenase (428 aa).

Substrate-binding residues include serine 232, glutamine 254, and histidine 257. Zn(2+) is bound by residues glutamine 254 and histidine 257. Residues glutamate 324 and histidine 325 each act as proton acceptor in the active site. Histidine 325, aspartate 358, glutamate 412, and histidine 417 together coordinate substrate. Residue aspartate 358 coordinates Zn(2+). Histidine 417 contacts Zn(2+).

It belongs to the histidinol dehydrogenase family. Zn(2+) is required as a cofactor.

It catalyses the reaction L-histidinol + 2 NAD(+) + H2O = L-histidine + 2 NADH + 3 H(+). The protein operates within amino-acid biosynthesis; L-histidine biosynthesis; L-histidine from 5-phospho-alpha-D-ribose 1-diphosphate: step 9/9. Catalyzes the sequential NAD-dependent oxidations of L-histidinol to L-histidinaldehyde and then to L-histidine. The chain is Histidinol dehydrogenase from Thermotoga maritima (strain ATCC 43589 / DSM 3109 / JCM 10099 / NBRC 100826 / MSB8).